The sequence spans 376 residues: Carbamoyl phosphate synthase small chain (376 aa).

A CPSase region spans residues 1 to 183 (MSKAVLVLED…PDGPPGVSRF (183 aa)). S46, G232, and G234 together coordinate L-glutamine. Positions 184–376 (TVAALDLGIK…FVELMAGEGR (193 aa)) constitute a Glutamine amidotransferase type-1 domain. C260 acts as the Nucleophile in catalysis. Residues F261, Q264, N302, G304, and F305 each coordinate L-glutamine. Active-site residues include H350 and E352.

Belongs to the CarA family. As to quaternary structure, composed of two chains; the small (or glutamine) chain promotes the hydrolysis of glutamine to ammonia, which is used by the large (or ammonia) chain to synthesize carbamoyl phosphate. Tetramer of heterodimers (alpha,beta)4.

The enzyme catalyses hydrogencarbonate + L-glutamine + 2 ATP + H2O = carbamoyl phosphate + L-glutamate + 2 ADP + phosphate + 2 H(+). The catalysed reaction is L-glutamine + H2O = L-glutamate + NH4(+). It participates in amino-acid biosynthesis; L-arginine biosynthesis; carbamoyl phosphate from bicarbonate: step 1/1. The protein operates within pyrimidine metabolism; UMP biosynthesis via de novo pathway; (S)-dihydroorotate from bicarbonate: step 1/3. Functionally, small subunit of the glutamine-dependent carbamoyl phosphate synthetase (CPSase). CPSase catalyzes the formation of carbamoyl phosphate from the ammonia moiety of glutamine, carbonate, and phosphate donated by ATP, constituting the first step of 2 biosynthetic pathways, one leading to arginine and/or urea and the other to pyrimidine nucleotides. The small subunit (glutamine amidotransferase) binds and cleaves glutamine to supply the large subunit with the substrate ammonia. This is Carbamoyl phosphate synthase small chain from Mycobacterium bovis (strain ATCC BAA-935 / AF2122/97).